A 640-amino-acid chain; its full sequence is Threonine--tRNA ligase (640 aa).

One can recognise a TGS domain in the interval Met-1–Thr-59. Residues Asp-240 to Pro-531 form a catalytic region. Zn(2+) contacts are provided by Cys-332, His-383, and His-508.

This sequence belongs to the class-II aminoacyl-tRNA synthetase family. In terms of assembly, homodimer. It depends on Zn(2+) as a cofactor.

Its subcellular location is the cytoplasm. The enzyme catalyses tRNA(Thr) + L-threonine + ATP = L-threonyl-tRNA(Thr) + AMP + diphosphate + H(+). In terms of biological role, catalyzes the attachment of threonine to tRNA(Thr) in a two-step reaction: L-threonine is first activated by ATP to form Thr-AMP and then transferred to the acceptor end of tRNA(Thr). Also edits incorrectly charged L-seryl-tRNA(Thr). This Thermotoga sp. (strain RQ2) protein is Threonine--tRNA ligase.